A 98-amino-acid chain; its full sequence is Small ribosomal subunit protein bS20 (98 aa).

Belongs to the bacterial ribosomal protein bS20 family.

In terms of biological role, binds directly to 16S ribosomal RNA. In Synechococcus sp. (strain CC9902), this protein is Small ribosomal subunit protein bS20.